The following is a 118-amino-acid chain: Large ribosomal subunit protein uL24 (118 aa).

This sequence belongs to the universal ribosomal protein uL24 family. In terms of assembly, part of the 50S ribosomal subunit.

One of two assembly initiator proteins, it binds directly to the 5'-end of the 23S rRNA, where it nucleates assembly of the 50S subunit. Functionally, one of the proteins that surrounds the polypeptide exit tunnel on the outside of the subunit. The sequence is that of Large ribosomal subunit protein uL24 from Prochlorococcus marinus (strain MIT 9313).